We begin with the raw amino-acid sequence, 75 residues long: DNA-directed RNA polymerase subunit omega (75 aa).

Belongs to the RNA polymerase subunit omega family. As to quaternary structure, in cyanobacteria the RNAP catalytic core is composed of 2 alpha, 1 beta, 1 beta', 1 gamma and 1 omega subunit. When a sigma factor is associated with the core the holoenzyme is formed, which can initiate transcription.

It catalyses the reaction RNA(n) + a ribonucleoside 5'-triphosphate = RNA(n+1) + diphosphate. Promotes RNA polymerase assembly. Latches the N- and C-terminal regions of the beta' subunit thereby facilitating its interaction with the beta and alpha subunits. The sequence is that of DNA-directed RNA polymerase subunit omega from Cyanothece sp. (strain PCC 7425 / ATCC 29141).